We begin with the raw amino-acid sequence, 178 residues long: ATP synthase subunit b, chloroplastic (178 aa).

Residues 23 to 43 (IFETNIINLAAVVAIVISFVG) form a helical membrane-spanning segment.

This sequence belongs to the ATPase B chain family. F-type ATPases have 2 components, F(1) - the catalytic core - and F(0) - the membrane proton channel. F(1) has five subunits: alpha(3), beta(3), gamma(1), delta(1), epsilon(1). F(0) has four main subunits: a(1), b(1), b'(1) and c(10-14). The alpha and beta chains form an alternating ring which encloses part of the gamma chain. F(1) is attached to F(0) by a central stalk formed by the gamma and epsilon chains, while a peripheral stalk is formed by the delta, b and b' chains.

It localises to the plastid. The protein resides in the chloroplast thylakoid membrane. In terms of biological role, f(1)F(0) ATP synthase produces ATP from ADP in the presence of a proton or sodium gradient. F-type ATPases consist of two structural domains, F(1) containing the extramembraneous catalytic core and F(0) containing the membrane proton channel, linked together by a central stalk and a peripheral stalk. During catalysis, ATP synthesis in the catalytic domain of F(1) is coupled via a rotary mechanism of the central stalk subunits to proton translocation. Its function is as follows. Component of the F(0) channel, it forms part of the peripheral stalk, linking F(1) to F(0). This chain is ATP synthase subunit b, chloroplastic, found in Tetradesmus obliquus (Green alga).